We begin with the raw amino-acid sequence, 731 residues long: MEAQHNETEAAGKPAAKKTTRTRKPRASKQATFIAEAPAMPIAIKEPGQFGRVNILNCQPSVEDDVYAARVEIGEQFTVSAQVFMEGRTKVGATAVLKNPRGRIMARVPMTVENAGLDLYTAKLQAGEHSTLNPWDAEFAEVKKQLGNWRVAIEGWEDTYGAWLHDARIKVDVLSDVENTLTSGSELLTRWASTRDANLNAEQRKTLREAAKSMMDTSLDAKSRLTFADNADIEALHETNPLRDGLTSSGDHVFHVERPKSSFSAWYQFFPRSEGAYLDDNGKKVQGNFHTAVSGLERAKAEGFNIVYLPPIFPIGVTNRKGPDGALNAGPDDPGSPFGIGSELGGHDTVDPLLGTMDDFKAFCQRAHELNLEVALDFALQCSPDHPWVKEHPNWFRTKPDGSIAYAENPPKKYQDIYPIDFDNDLEGIEREVERIMNLWIDAGVTIFRVDNPHTKPVRFWQDVIAAVTKKHPEVLFLAEAFTRPAMVRALSYAGFTQSHCYFPWRNTKPQLEEFLQETNGKGGYYQHNTFWPTTPDILTAYVRDGGVAAHAIRAVLAALGSPSWGIYNGYELIENRQRADAEEQSSNEKFEIKVRDWSAANRIGISKLLTSLNEIRSKHAATTSYHNLTILPSANENIIAFARQTEGRFTKDGRTDTLIVVVNLDPYNEQQSSIHVDAKALGLPTEHPYRVKDQLTGREYDWSWDNFVSLAPWADVAHVFHVETGEQPLD.

Over residues 1–10 (MEAQHNETEA) the composition is skewed to basic and acidic residues. The interval 1 to 31 (MEAQHNETEAAGKPAAKKTTRTRKPRASKQA) is disordered. Positions 15–27 (AAKKTTRTRKPRA) are enriched in basic residues. Alpha-maltose 1-phosphate contacts are provided by Lys321, Gln381, and Asp416. Asp451 serves as the catalytic Nucleophile. Asn452 is a binding site for alpha-maltose 1-phosphate. The active-site Proton donor is the Glu480. 590–591 (KF) lines the alpha-maltose 1-phosphate pocket.

This sequence belongs to the glycosyl hydrolase 13 family. GlgE subfamily. In terms of assembly, homodimer.

It catalyses the reaction alpha-maltose 1-phosphate + [(1-&gt;4)-alpha-D-glucosyl](n) = [(1-&gt;4)-alpha-D-glucosyl](n+2) + phosphate. Its function is as follows. Maltosyltransferase that uses maltose 1-phosphate (M1P) as the sugar donor to elongate linear or branched alpha-(1-&gt;4)-glucans. Is involved in a branched alpha-glucan biosynthetic pathway from trehalose, together with TreS, Mak and GlgB. The chain is Alpha-1,4-glucan:maltose-1-phosphate maltosyltransferase from Bifidobacterium animalis subsp. lactis (strain Bl-04 / DGCC2908 / RB 4825 / SD5219).